An 881-amino-acid polypeptide reads, in one-letter code: Squamosa promoter-binding-like protein 1 (881 aa).

The tract at residues 49–69 (FPLGNSSNSSSSCSDEGNDKK) is disordered. Over residues 53-62 (NSSNSSSSCS) the composition is skewed to low complexity. Residues 96–187 (PAKKTKSGAV…RKTNPEPGAN (92 aa)) are sufficient and necessary for DNA binding. The SBP-type zinc finger occupies 103–180 (GAVCQVENCE…AGHNKRRRKT (78 aa)). Residues C106, C111, C128, H131, C147, C150, H154, and C166 each coordinate Zn(2+). The Bipartite nuclear localization signal motif lies at 163-179 (KRSCRRRLAGHNKRRRK). A compositionally biased stretch (basic residues) spans 170–179 (LAGHNKRRRK). Disordered stretches follow at residues 170-193 (LAGHNKRRRKTNPEPGANGNPSDD) and 274-358 (FSAR…EDAQ). Residues 275–284 (SARQDGTATE) are compositionally biased toward polar residues. A compositionally biased stretch (basic and acidic residues) spans 285–295 (NRSEKQVKMND). The segment covering 319 to 338 (PATSSLDYPSWIHQSSPPQT) has biased composition (polar residues). Residues 339 to 356 (SRNSDSASDQSPSSSSED) show a composition bias toward low complexity.

Zn(2+) serves as cofactor.

It is found in the nucleus. Functionally, trans-acting factor that binds specifically to the consensus nucleotide sequence 5'-TNCGTACAA-3' of AP1 promoter. Binds specifically to the 5'-GTAC-3' core sequence. The protein is Squamosa promoter-binding-like protein 1 (SPL1) of Arabidopsis thaliana (Mouse-ear cress).